We begin with the raw amino-acid sequence, 233 residues long: Ciliary microtubule inner protein 6 (233 aa).

Composition is skewed to basic and acidic residues over residues 1–14 and 21–33; these read MEGE…KTED and AERK…EKSP. The segment at 1-45 is disordered; the sequence is MEGEEKQQQHKTEDDGIACVAERKVEIKNEKSPGKSTQHPKPCVD. Positions 127–159 are mn; that stretch reads GIVPLTSLDVSGEHENNFVEYISFIHQYDARRT. The disordered stretch occupies residues 192-233; it reads LLNTLESGSSEQPQKTDKGNSSGDKVTSPGLCQQNSQELLET. Residues 195–233 show a composition bias toward polar residues; sequence TLESGSSEQPQKTDKGNSSGDKVTSPGLCQQNSQELLET.

The protein resides in the cell projection. It is found in the cilium. In Mus musculus (Mouse), this protein is Ciliary microtubule inner protein 6 (Cimip6).